Here is a 307-residue protein sequence, read N- to C-terminus: Alpha N-terminal protein methyltransferase 1 (307 aa).

Positions 38-51 (EPAPAPAAGSNGVA) are enriched in low complexity. The interval 38 to 60 (EPAPAPAAGSNGVAGEEEAGGGG) is disordered. Residues glycine 123, arginine 128, 145–147 (EPV), 179–180 (LQ), and glutamine 195 contribute to the S-adenosyl-L-methionine site.

The protein belongs to the methyltransferase superfamily. NTM1 family.

It catalyses the reaction N-terminal L-alanyl-L-prolyl-L-lysyl-[protein] + 3 S-adenosyl-L-methionine = N-terminal N,N,N-trimethyl-L-alanyl-L-prolyl-L-lysyl-[protein] + 3 S-adenosyl-L-homocysteine + 3 H(+). It carries out the reaction N-terminal L-seryl-L-prolyl-L-lysyl-[protein] + 3 S-adenosyl-L-methionine = N-terminal N,N,N-trimethyl-L-seryl-L-prolyl-L-lysyl-[protein] + 3 S-adenosyl-L-homocysteine + 3 H(+). The enzyme catalyses N-terminal L-prolyl-L-prolyl-L-lysyl-[protein] + 2 S-adenosyl-L-methionine = N-terminal N,N-dimethyl-L-prolyl-L-prolyl-L-lysyl-[protein] + 2 S-adenosyl-L-homocysteine + 2 H(+). Its function is as follows. Alpha-N-methyltransferase that methylates the N-terminus of target proteins containing the N-terminal motif [Ala/Pro/Ser]-Pro-Lys when the initiator Met is cleaved. Specifically catalyzes mono-, di- or tri-methylation of exposed alpha-amino group of Ala or Ser residue in the [Ala/Ser]-Pro-Lys motif and mono- or di-methylation of Pro in the Pro-Pro-Lys motif. This Oryza sativa subsp. japonica (Rice) protein is Alpha N-terminal protein methyltransferase 1.